The following is a 1099-amino-acid chain: Protein transport protein Sec24A (1099 aa).

Disordered stretches follow at residues 1 to 36 (MSQP…GPVQ), 65 to 139 (KTLN…LPGA), and 279 to 317 (SQPT…AGLP). 5 stretches are compositionally biased toward polar residues: residues 10–20 (GGSSTGLQAQN), 68–90 (NPVS…NYQG), 108–126 (SLHS…QNPA), 279–292 (SQPT…SRSV), and 303–317 (YQNT…AGLP). Residues Cys-437, Cys-440, Cys-458, and Cys-461 each coordinate Zn(2+). Positions 437–461 (CRSCRTYINPFVSFLDQRRWKCNLC) are zinc finger-like. One copy of the Gelsolin-like repeat lies at 972–1044 (PQPPILQLSV…TPESARTIAF (73 aa)).

This sequence belongs to the SEC23/SEC24 family. SEC24 subfamily. COPII is composed of at least five proteins: the Sec23/24 complex, the Sec13/31 complex and Sar1. Interacts with TMED2. Interacts (as part of the Sec23/24 complex) with SEC22B; recruits SEC22B into COPII-coated vesicles for its transport from the endoplasmic reticulum to the Golgi. Interacts with STING1; promoting STING1 translocation to COPII vesicles in a STEEP1-dependent manner. Interacts with TMEM39A. Interacts with SACM1L; this interaction is reduced in the absence of TMEM39A. Interacts with kinase FAM20C; transport of FAM20C from the endoplasmic reticulum to the Golgi is likely to be mediated by COPII vesicles.

Its subcellular location is the cytoplasmic vesicle. The protein localises to the COPII-coated vesicle membrane. It localises to the endoplasmic reticulum membrane. The protein resides in the cytoplasm. It is found in the cytosol. Functionally, component of the coat protein complex II (COPII) which promotes the formation of transport vesicles from the endoplasmic reticulum (ER). The coat has two main functions, the physical deformation of the endoplasmic reticulum membrane into vesicles and the selection of cargo molecules for their transport to the Golgi complex. Plays a central role in cargo selection within the COPII complex and together with SEC24B may have a different specificity compared to SEC24C and SEC24D. May package preferentially cargos with cytoplasmic DxE or LxxLE motifs and may also recognize conformational epitopes. This is Protein transport protein Sec24A from Bos taurus (Bovine).